A 367-amino-acid polypeptide reads, in one-letter code: Heme A synthase (367 aa).

5 helical membrane-spanning segments follow: residues 26-46 (IRGW…VGGA), 111-131 (LLAR…WVTG), 139-159 (LPLL…WWMV), 174-194 (LATH…IYRG), and 212-232 (AGAI…VAGL). His274 lines the heme pocket. 3 helical membrane-spanning segments follow: residues 276–296 (LGAY…LRAA), 305–325 (SVLL…TLLL), and 327–347 (VPIG…GFAI). A heme-binding site is contributed by His335.

It belongs to the COX15/CtaA family. Type 2 subfamily. In terms of assembly, interacts with CtaB. Requires heme b as cofactor.

The protein localises to the cell membrane. The enzyme catalyses Fe(II)-heme o + 2 A + H2O = Fe(II)-heme a + 2 AH2. It participates in porphyrin-containing compound metabolism; heme A biosynthesis; heme A from heme O: step 1/1. Its function is as follows. Catalyzes the conversion of heme O to heme A by two successive hydroxylations of the methyl group at C8. The first hydroxylation forms heme I, the second hydroxylation results in an unstable dihydroxymethyl group, which spontaneously dehydrates, resulting in the formyl group of heme A. In Rhizobium meliloti (strain 1021) (Ensifer meliloti), this protein is Heme A synthase.